Consider the following 1462-residue polypeptide: Glucosyltransferase-S (1462 aa).

Residues 35 to 164 (SSVSAETEQQ…RQTAAQENKN (130 aa)) are disordered. The segment covering 37 to 52 (VSAETEQQTSDKVVTQ) has biased composition (polar residues). Positions 71-85 (TKQAQTEQTQAQSQA) are enriched in low complexity. Positions 86–108 (NVADTSTSITKETPSQNITTQAN) are enriched in polar residues. The span at 109-133 (SDDKTVTNTKSEEAQTSEERTKQAE) shows a compositional bias: basic and acidic residues. Over residues 134-149 (EAQATASSQALTQAKA) the composition is skewed to low complexity. Over residues 154 to 163 (QRQTAAQENK) the composition is skewed to polar residues. 14 Cell wall-binding repeats span residues 171-190 (IPNVKQIDGKYYYIGSDGQP), 192-211 (KNFALTVNNKVLYFDKNTGA), 1095-1115 (STGFVNDGNGMTFYSTSGYQA), 1116-1136 (KNSFVQDAKGNWYYFDNNGHM), 1137-1156 (VYGLQHLNGEVQYFLSNGVQ), 1180-1201 (SNGYYSFDNDSKWRYFDASGVM), 1202-1221 (AVGLKTINGNTQYFDQDGYQ), 1223-1244 (KGAWITGSDGKKRYFDDGSGNM), 1246-1266 (VNRFANDKNGDWYYLNSDGIA), 1267-1286 (LVGVQTINGKTYYFGQDGKQ), 1310-1330 (RNIFATDSQNNWYYFGSDGVA), 1331-1350 (VTGSQTIAGKKLYFASDGKQ), 1352-1372 (KGSFVTYNGKVHYYHADSGEL), and 1374-1394 (VNRFEADKDGNWYYLDSNGEA).

This sequence belongs to the glycosyl hydrolase 70 family.

It localises to the secreted. The enzyme catalyses [(1-&gt;6)-alpha-D-glucosyl](n) + sucrose = [(1-&gt;6)-alpha-D-glucosyl](n+1) + D-fructose. In terms of biological role, production of extracellular glucans, that are thought to play a key role in the development of the dental plaque because of their ability to adhere to smooth surfaces and mediate the aggregation of bacterial cells and food debris. This chain is Glucosyltransferase-S (gtfD), found in Streptococcus mutans serotype c (strain ATCC 700610 / UA159).